A 144-amino-acid chain; its full sequence is Ferredoxin-thioredoxin reductase catalytic chain, chloroplastic (144 aa).

The N-terminal 31 residues, 1 to 31 (MTTQASTFAVAVPSVATPFRRHRNPFVVRAQ), are a transit peptide targeting the chloroplast. C83 is a [4Fe-4S] cluster binding site. Residue C85 is the Nucleophile of the active site. C85 and C115 are disulfide-bonded. [4Fe-4S] cluster contacts are provided by C102, C104, and C113.

This sequence belongs to the ferredoxin thioredoxin reductase beta subunit family. In terms of assembly, heterodimer of subunit A (variable subunit) and subunit B (catalytic subunit). Heterodimeric FTR forms a complex with ferredoxin and thioredoxin. [4Fe-4S] cluster is required as a cofactor.

It localises to the plastid. The protein localises to the chloroplast. The catalysed reaction is [thioredoxin]-disulfide + 2 reduced [2Fe-2S]-[ferredoxin] + 2 H(+) = [thioredoxin]-dithiol + 2 oxidized [2Fe-2S]-[ferredoxin]. Its function is as follows. Catalytic subunit of the ferredoxin-thioredoxin reductase (FTR), which catalyzes the two-electron reduction of thioredoxins by the electrons provided by reduced ferredoxin. The protein is Ferredoxin-thioredoxin reductase catalytic chain, chloroplastic (FTRC) of Glycine max (Soybean).